We begin with the raw amino-acid sequence, 314 residues long: UDP-glucose 4-epimerase (314 aa).

NAD(+) is bound by residues 11–12 (FI), 31–36 (DNFATG), 56–57 (DI), and 77–81 (LAAQI). 2 residues coordinate substrate: Ser-121 and Tyr-146. The NAD(+) site is built by Tyr-146 and Lys-150. Tyr-146 functions as the Proton acceptor in the catalytic mechanism. Substrate contacts are provided by residues Asn-175, 189-190 (VV), 204-206 (RVF), Arg-213, and 271-274 (RLGD).

It belongs to the NAD(P)-dependent epimerase/dehydratase family. In terms of assembly, homodimer. The cofactor is NAD(+).

It carries out the reaction UDP-alpha-D-glucose = UDP-alpha-D-galactose. It functions in the pathway carbohydrate metabolism; galactose metabolism. Its function is as follows. Involved in the metabolism of galactose. Catalyzes the conversion of UDP-galactose (UDP-Gal) to UDP-glucose (UDP-Glc) through a mechanism involving the transient reduction of NAD. The polypeptide is UDP-glucose 4-epimerase (galE1) (Mycobacterium tuberculosis (strain CDC 1551 / Oshkosh)).